We begin with the raw amino-acid sequence, 413 residues long: NPL4-like protein 2 (413 aa).

The residue at position 104 (serine 104) is a Phosphoserine. Positions 131–272 (SVSFDRDAAN…ADVHFEAFQM (142 aa)) constitute an MPN domain.

It belongs to the NPL4 family.

It participates in protein degradation; proteasomal ubiquitin-dependent pathway. Functionally, may be part of a complex that binds ubiquitinated proteins and that is necessary for the export of misfolded proteins from the ER to the cytoplasm, where they are degraded by the proteasome. In Arabidopsis thaliana (Mouse-ear cress), this protein is NPL4-like protein 2.